The primary structure comprises 610 residues: Serine/threonine-protein kinase RCK2 (610 aa).

2 disordered regions span residues 1 to 55 (MLKI…QDKN) and 99 to 127 (TSVP…SLSE). A compositionally biased stretch (basic and acidic residues) spans 11 to 24 (KKPDQADLSQESKK). Over residues 31 to 55 (RSSGTNNKDVSQITSSPKKSFQDKN) the composition is skewed to polar residues. Residues serine 46 and serine 50 each carry the phosphoserine modification. In terms of domain architecture, Protein kinase spans 163-478 (YKLINKIGEG…IDQFLDDPWL (316 aa)). Residue 169-177 (IGEGAFSKV) coordinates ATP. A Phosphoserine modification is found at serine 187. Lysine 201 contacts ATP. Aspartate 313 (proton acceptor) is an active-site residue. Threonine 350 is modified (phosphothreonine). Residues 493 to 506 (KKAGTSERRHPHKK) are calmodulin-binding. Phosphoserine is present on serine 520. The tract at residues 541–564 (EDRMGTRGGLGSLAEDEELEDSYS) is disordered.

This sequence belongs to the protein kinase superfamily. CAMK Ser/Thr protein kinase family. CaMK subfamily. Autophosphorylated. Phosphorylated by HOG1 at Ser-520 after osmotic stress.

It localises to the cytoplasm. It catalyses the reaction L-seryl-[protein] + ATP = O-phospho-L-seryl-[protein] + ADP + H(+). The enzyme catalyses L-threonyl-[protein] + ATP = O-phospho-L-threonyl-[protein] + ADP + H(+). Its activity is regulated as follows. Activated by Ser-520 phosphorylation by HOG1. Its function is as follows. Serine/threonine-protein kinase involved in a signal transduction pathway that is activated by changes in the osmolarity of the extracellular environment. The protein is Serine/threonine-protein kinase RCK2 (RCK2) of Saccharomyces cerevisiae (strain ATCC 204508 / S288c) (Baker's yeast).